The chain runs to 466 residues: Cocosin 1 (466 aa).

Positions 1 to 22 are cleaved as a signal peptide; it reads MGSSSLLSFSLCLLLLCHLSQA. 2 disulfide bridges follow: cysteine 45–cysteine 78 and cysteine 121–cysteine 288. Cupin type-1 domains lie at 50–242 and 294–443; these read LNAL…ELAR and QNIG…DEAR.

It belongs to the 11S seed storage protein (globulins) family. As to quaternary structure, hexamer; each subunit is composed of an acidic and a basic chain derived from a single precursor and linked by a disulfide bond. As to expression, endosperm of the seeds.

Seed storage protein. The chain is Cocosin 1 from Cocos nucifera (Coconut palm).